The following is a 77-amino-acid chain: U8-lycotoxin-Ls1d (77 aa).

Residues 1–20 form the signal peptide; that stretch reads MKLIIFTGLVLFAIVSLIEA. The propeptide occupies 21–26; sequence QAENEK.

It belongs to the neurotoxin 19 (CSTX) family. 08 (U8-Lctx) subfamily. In terms of processing, contains 4 disulfide bonds. In terms of tissue distribution, expressed by the venom gland.

It is found in the secreted. The sequence is that of U8-lycotoxin-Ls1d from Lycosa singoriensis (Wolf spider).